The primary structure comprises 432 residues: Glutamyl-tRNA reductase (432 aa).

Substrate is bound by residues 49–52 (TCNR), Ser107, 112–114 (ETQ), and Gln118. The Nucleophile role is filled by Cys50. Residue 186 to 191 (GAGEMG) coordinates NADP(+).

Belongs to the glutamyl-tRNA reductase family. As to quaternary structure, homodimer.

It carries out the reaction (S)-4-amino-5-oxopentanoate + tRNA(Glu) + NADP(+) = L-glutamyl-tRNA(Glu) + NADPH + H(+). Its pathway is porphyrin-containing compound metabolism; protoporphyrin-IX biosynthesis; 5-aminolevulinate from L-glutamyl-tRNA(Glu): step 1/2. Catalyzes the NADPH-dependent reduction of glutamyl-tRNA(Glu) to glutamate 1-semialdehyde (GSA). This is Glutamyl-tRNA reductase from Campylobacter jejuni subsp. doylei (strain ATCC BAA-1458 / RM4099 / 269.97).